A 279-amino-acid chain; its full sequence is MKVISSIQELRDQLRGQNRTAFVPTMGNLHEGHLSLMRLARQHGDPVVASIFVNRLQFGPNEDFDKYPRTLQDDIEKLQKENVYVLFAPTERDMYPEPQEYRVLPPDDLGGILEGEFRPGFFAGVCTVVTKLMSCVQPRVAVFGKKDYQQLMIVRRMCQQLALPVDIIAAETVRDEDGLALSSRNRYLTTDERKEAPELAKTLQRVRDGVLGGERDLGKLEQTARAHLAERGWAPDYISIRRRANLIAPSAAELEAGEPLVVLAAAKLGATRLIDNLEI.

26–33 (MGNLHEGH) contributes to the ATP binding site. His-33 acts as the Proton donor in catalysis. Gln-57 is a (R)-pantoate binding site. Gln-57 lines the beta-alanine pocket. 144 to 147 (GKKD) contacts ATP. A (R)-pantoate-binding site is contributed by Gln-150. Residues Val-173 and 181 to 184 (LSSR) contribute to the ATP site.

Belongs to the pantothenate synthetase family. Homodimer.

It localises to the cytoplasm. It carries out the reaction (R)-pantoate + beta-alanine + ATP = (R)-pantothenate + AMP + diphosphate + H(+). Its pathway is cofactor biosynthesis; (R)-pantothenate biosynthesis; (R)-pantothenate from (R)-pantoate and beta-alanine: step 1/1. Catalyzes the condensation of pantoate with beta-alanine in an ATP-dependent reaction via a pantoyl-adenylate intermediate. The chain is Pantothenate synthetase from Burkholderia ambifaria (strain ATCC BAA-244 / DSM 16087 / CCUG 44356 / LMG 19182 / AMMD) (Burkholderia cepacia (strain AMMD)).